Here is a 249-residue protein sequence, read N- to C-terminus: Ribosomal RNA small subunit methyltransferase G (249 aa).

S-adenosyl-L-methionine is bound by residues Gly88, Phe93, 111–113 (DAT), 139–140 (AE), and Arg158.

This sequence belongs to the methyltransferase superfamily. RNA methyltransferase RsmG family.

It is found in the cytoplasm. Functionally, specifically methylates the N7 position of a guanine in 16S rRNA. In Thermus thermophilus (strain ATCC BAA-163 / DSM 7039 / HB27), this protein is Ribosomal RNA small subunit methyltransferase G.